The primary structure comprises 797 residues: Plakophilin-3 (797 aa).

The segment at 58–81 (GQQSRHNGSAELDGSAESARGMPR) is disordered. Omega-N-methylarginine is present on Arg81. Phosphoserine occurs at positions 123, 180, and 183. At Tyr195 the chain carries Phosphotyrosine. Positions 219 to 228 (ASSGSSRAGG) are enriched in low complexity. Positions 219 to 241 (ASSGSSRAGGLDWPEATEGPPSR) are disordered. Ser240 is modified (phosphoserine). Phosphothreonine is present on Thr250. A disordered region spans residues 253-274 (RFQSSHRSRGGTGSVSGAGLEP). At Arg261 the chain carries Omega-N-methylarginine. The required for interaction with SFN stretch occupies residues 283-288 (SLSLSL). Residues Ser285, Ser313, Ser314, and Ser331 each carry the phosphoserine modification. The tract at residues 294 to 724 (LPDVRGLDSY…AEVLVNIIAV (431 aa)) is required for interaction with GSK3B. ARM repeat units lie at residues 305–348 (GHRT…HRCY), 351–390 (AAAK…NLIY), 393–432 (VDNK…NLSS), 449–487 (TDLV…NLSS), 491–536 (ATRQ…NLSY), 596–637 (PKGL…NITA), 645–684 (VLSR…NLSR), and 689–730 (KDEM…NLVV). Residues 516 to 797 (VGKCEDKSVE…GYRKEDFLGP (282 aa)) are required for binding to PKP2 mRNA.

Belongs to the beta-catenin family. Found in a complex composed of CDH1, RAP1A and PKP3; PKP3 acts as a scaffold protein within the complex, the complex is required for CDH1 localization to mature desmosome cell junctions. Interacts with FXR1; the interaction facilitates the binding of PKP3 to PKP2 mRNA. Interacts (via ARM repeats) with GSK3B; the interaction may be involved in PKP3 protein degradation. Interacts with hyperphosphorylated and hypophosphorylated RB1; the interaction inhibits RB1 interaction with and repression of the transcription factor E2F1, potentially via sequestering RB1 to the cytoplasm. Interacts with CDKN1A; the interaction sequesters CDKN1A to the cytoplasm thereby repressing its role as an inhibitor of CDK4- and CDK6-driven RB1 phosphorylation. Interacts (via N-terminus) with SFN; the interaction maintains the cytoplasmic pool of PKP3, facilitates PKP3 exchange at desmosomes and restricts PKP3 localization to existing desmosome cell junctions. Interacts (via N-terminus) with JUP; the interaction is required for PKP3 localization to desmosome cell-cell junctions. In terms of processing, phosphorylated at Ser-285 when localized to the cytoplasm, PKP3 at desmosome cell junctions is not phosphorylated. Phosphorylation at Try-195 by SRC is induced by reactive oxygen species and potentially acts as a release mechanism from desmosome cell-cell junctions. As to expression, expressed in all layers of the epidermis, but is most abundant in the basal layer (at protein level). Expressed in keratinocytes of the epidermis at birth (at protein level). Expressed in the anagen non-keratinized inner root sheath cuticle and hair cuticle (at protein level). Also expressed in the matrix, precursors of the inner root sheath and hair shaft lineages (at protein level). Expressed at apical membranes in the outer hair root sheath and basal layer keratinocytes (at protein level). Expressed in intestinal epithelial cells and lamina propria of the ileum (at protein level). Expressed in keratinocytes (at protein level).

Its subcellular location is the nucleus. It is found in the cell junction. The protein localises to the desmosome. The protein resides in the cytoplasm. It localises to the cell membrane. Its subcellular location is the adherens junction. A component of desmosome cell-cell junctions which are required for positive regulation of cellular adhesion. Required for the localization of DSG2, DSP and PKP2 to mature desmosome junctions. May also play a role in the maintenance of DSG3 protein abundance in keratinocytes. Required for the formation of DSP-containing desmosome precursors in the cytoplasm during desmosome assembly. Also regulates the accumulation of CDH1 to mature desmosome junctions, via cAMP-dependent signaling and its interaction with activated RAP1A. Positively regulates the stabilization of PKP2 mRNA and therefore protein abundance, via its interaction with FXR1, may also regulate the protein abundance of DSP via the same mechanism. May also regulate the protein abundance of the desmosome component PKP1. Required for the organization of desmosome junctions at intercellular borders between basal keratinocytes of the epidermis, as a result plays a role in maintenance of the dermal barrier and regulation of the dermal inflammatory response. Required during epidermal keratinocyte differentiation for cell adherence at tricellular cell-cell contacts, via regulation of the timely formation of adherens junctions and desmosomes in a calcium-dependent manner, and may also play a role in the organization of the intracellular actin fiber belt. Acts as a negative regulator of the inflammatory response in hematopoietic cells of the skin and intestine, via modulation of proinflammatory cytokine production. Important for epithelial barrier maintenance in the intestine to reduce intestinal permeability, thereby plays a role in protection from intestinal-derived endotoxemia. Required for the development of hair follicles, via a role in the regulation of inner root sheaf length, correct alignment and anterior-posterior polarity of hair follicles. Promotes proliferation and cell-cycle G1/S phase transition of keratinocytes. Promotes E2F1-driven transcription of G1/S phase promoting genes by acting to release E2F1 from its inhibitory interaction with RB1, via sequestering RB1 and CDKN1A to the cytoplasm and thereby increasing CDK4- and CDK6-driven phosphorylation of RB1. May act as a scaffold protein to facilitate MAPK phosphorylation of RPS6KA protein family members and subsequently promote downstream EGFR signaling. May play a role in the positive regulation of transcription of Wnt-mediated TCF-responsive target genes. This Mus musculus (Mouse) protein is Plakophilin-3 (Pkp3).